A 292-amino-acid polypeptide reads, in one-letter code: Protoheme IX farnesyltransferase (292 aa).

The next 8 membrane-spanning stretches (helical) occupy residues 15-35 (YLVL…LGGM), 49-69 (FWTL…NMVI), 104-124 (VFSL…LVAL), 147-167 (IGGI…SGSV), 171-191 (AIAL…VLAL), 218-238 (TLLY…TGLV), 242-262 (YFVV…KFFF), and 271-291 (LFFF…VDMV).

It belongs to the UbiA prenyltransferase family. Protoheme IX farnesyltransferase subfamily.

Its subcellular location is the cell inner membrane. It carries out the reaction heme b + (2E,6E)-farnesyl diphosphate + H2O = Fe(II)-heme o + diphosphate. Its pathway is porphyrin-containing compound metabolism; heme O biosynthesis; heme O from protoheme: step 1/1. In terms of biological role, converts heme B (protoheme IX) to heme O by substitution of the vinyl group on carbon 2 of heme B porphyrin ring with a hydroxyethyl farnesyl side group. The sequence is that of Protoheme IX farnesyltransferase from Aquifex aeolicus (strain VF5).